The chain runs to 288 residues: Intermediate transcription factor 3 small subunit (288 aa).

Belongs to the orthopoxvirus OPG134 family. As to quaternary structure, heterodimer of a 45 kDa (A23R) and a 32 kDa (A8R) subunit to form the virus intermediate transcription factor (VITF)-3.

Functionally, acts with RNA polymerase to initiate transcription from intermediate gene promoters. The chain is Intermediate transcription factor 3 small subunit (OPG134) from Vaccinia virus (strain Copenhagen) (VACV).